The sequence spans 734 residues: Polyphosphate kinase (734 aa).

Position 67 (Asn-67) interacts with ATP. The Mg(2+) site is built by Arg-392 and Arg-422. In terms of domain architecture, PLD phosphodiesterase spans 447-481 (THLKTHSKIALVVKRINNELTSFVHLGTGNYNDKT). His-452 functions as the Phosphohistidine intermediate in the catalytic mechanism. Residues Tyr-485, Arg-581, and His-609 each contribute to the ATP site. The segment at 705-734 (KKQSVQPSGQPVHSRRGGSWMRKLKNTFKR) is disordered.

This sequence belongs to the polyphosphate kinase 1 (PPK1) family. Requires Mg(2+) as cofactor. An intermediate of this reaction is the autophosphorylated ppk in which a phosphate is covalently linked to a histidine residue through a N-P bond.

It carries out the reaction [phosphate](n) + ATP = [phosphate](n+1) + ADP. Its function is as follows. Catalyzes the reversible transfer of the terminal phosphate of ATP to form a long-chain polyphosphate (polyP). This chain is Polyphosphate kinase, found in Staphylococcus epidermidis (strain ATCC 12228 / FDA PCI 1200).